Consider the following 424-residue polypeptide: S-adenosylmethionine synthase (424 aa).

Position 16 (H16) interacts with ATP. D18 provides a ligand contact to Mg(2+). E44 contacts K(+). Residues E57 and Q100 each contribute to the L-methionine site. The flexible loop stretch occupies residues 100 to 110; sequence QSPDIAQGVNT. ATP-binding positions include 175 to 177, 251 to 252, D260, 266 to 267, A283, and K287; these read DGK, KF, and RK. L-methionine is bound at residue D260. L-methionine is bound at residue K291.

This sequence belongs to the AdoMet synthase family. Homotetramer; dimer of dimers. It depends on Mg(2+) as a cofactor. The cofactor is K(+).

The protein resides in the cytoplasm. The catalysed reaction is L-methionine + ATP + H2O = S-adenosyl-L-methionine + phosphate + diphosphate. The protein operates within amino-acid biosynthesis; S-adenosyl-L-methionine biosynthesis; S-adenosyl-L-methionine from L-methionine: step 1/1. Catalyzes the formation of S-adenosylmethionine (AdoMet) from methionine and ATP. The overall synthetic reaction is composed of two sequential steps, AdoMet formation and the subsequent tripolyphosphate hydrolysis which occurs prior to release of AdoMet from the enzyme. The sequence is that of S-adenosylmethionine synthase from Nostoc punctiforme (strain ATCC 29133 / PCC 73102).